The sequence spans 315 residues: Long form salivary protein D7L1 (315 aa).

A signal peptide spans 1 to 18 (MIIVAVLLSFLAHLLVQA). 2 disulfides stabilise this stretch: cysteine 37–cysteine 73 and cysteine 69–cysteine 128. Residue tryptophan 55 participates in thromboxane A2 binding. Tryptophan 58 contributes to the leukotriene C4 binding site. A thromboxane A2-binding site is contributed by tyrosine 70. Leukotriene C4 contacts are provided by glycine 152 and lysine 170. Thromboxane A2 is bound at residue lysine 170. Cystine bridges form between cysteine 178–cysteine 211 and cysteine 252–cysteine 263.

The protein belongs to the PBP/GOBP family. As to expression, distal-lateral and median lobes of female salivary gland (at protein level). Not detected in male salivary gland (at protein level). Expressed in female salivary gland. Not detected in female carcass without salivary glands. Expressed in male salivary gland and other tissues.

The protein resides in the secreted. Functionally, modulates blood feeding of female mosquitoes on vertebrate species by binding and sequestering different mediators involved in the host response. Binds leukotriene C4, leukotriene D4, leukotriene E4 and stable analogs of thromboxane A2, U-46619 and carbocyclic TXA2. Binds weakly prostaglandins: PGD2, PGE2 and PGF2alpha. Does not bind leukotriene B4, biogenic amines, ADP, platelet activating phospholipid derivative PAF and arachidonic acid. Inhibits agonist-induced smooth muscle contraction. Inhibits platelet aggregation induced by low concentrations of collagen in thromboxane A2-dependent manner. This Anopheles stephensi (Indo-Pakistan malaria mosquito) protein is Long form salivary protein D7L1.